The primary structure comprises 645 residues: Serine/threonine-protein kinase Nek11 (645 aa).

A Protein kinase domain is found at 29–287 (YVLQQKLGSG…AIEILKIPYL (259 aa)). ATP contacts are provided by residues 35-43 (LGSGSFGTV) and Lys-61. Residue Asp-158 is the Proton acceptor of the active site. A Phosphoserine; by CHEK1 modification is found at Ser-273. A coiled-coil region spans residues 346–385 (RLRKLQAADEKARKLKKIVEEKYEENSKRMQELRSRNFQQ). The disordered stretch occupies residues 399-445 (GMEEKEEQPEGRLSCSPQDEDEERWQGREEESDEPTLENLPESQPIP).

The protein belongs to the protein kinase superfamily. NEK Ser/Thr protein kinase family. NIMA subfamily. As to quaternary structure, interacts with isoform 1 of NEK2. The cofactor is Mn(2+). Mg(2+) is required as a cofactor. Post-translationally, phosphorylated by NEK2. Phosphorylation at Ser-273 is important for its activation. In terms of tissue distribution, poorly expressed in cerebellum, trachea, lung, appendix, and uterus.

Its subcellular location is the nucleus. It localises to the nucleolus. The catalysed reaction is L-seryl-[protein] + ATP = O-phospho-L-seryl-[protein] + ADP + H(+). It carries out the reaction L-threonyl-[protein] + ATP = O-phospho-L-threonyl-[protein] + ADP + H(+). Its activity is regulated as follows. Autorepressed by intramolecular binding of the C-terminus which dissociates following phosphorylation by NEK2 isoform 1 in G1/S-arrested cells. NEK2 isoform 2 is largely not present in the nucleolus, and does not appear to phosphorylate NEK11. Activated in response to DNA damage. Inhibited by zinc. Functionally, protein kinase which plays an important role in the G2/M checkpoint response to DNA damage. Controls degradation of CDC25A by directly phosphorylating it on residues whose phosphorylation is required for BTRC-mediated polyubiquitination and degradation. This chain is Serine/threonine-protein kinase Nek11, found in Homo sapiens (Human).